Consider the following 363-residue polypeptide: Galactokinase (363 aa).

Residue 16-19 participates in substrate binding; that stretch reads EHTD. ATP contacts are provided by residues Ser50 and 103–109; that span reads GSGLSSS. Ser109 and Glu141 together coordinate Mg(2+). Catalysis depends on Asp153, which acts as the Proton acceptor. Tyr205 is a binding site for substrate.

This sequence belongs to the GHMP kinase family. GalK subfamily.

Its subcellular location is the cytoplasm. It catalyses the reaction alpha-D-galactose + ATP = alpha-D-galactose 1-phosphate + ADP + H(+). Its pathway is carbohydrate metabolism; galactose metabolism. Functionally, catalyzes the transfer of the gamma-phosphate of ATP to D-galactose to form alpha-D-galactose-1-phosphate (Gal-1-P). This chain is Galactokinase, found in Mycobacterium tuberculosis (strain ATCC 25177 / H37Ra).